The sequence spans 609 residues: MRAGDETETSIMRPQYPGDDIRPTSKKELAGWYSYGWAAEVFTVCAMGSFLPITLEQMARDRGVLLSDKVTPCSATLNGPSKTSTQAQWTLSSRYYAGGPTVVSQCVVYIFGVEINTASFAMYTFSVSVFIQAILIISMSGAADHGSHRKLLLVAFAVIGSVSTMLFLGVVPKIYMVGAVIAIIANTCFGASFVLLNSFLPLLVRHHPSVLRGAREPPPALDGSRAQEGHSDTTNDIDHGVESNATSPLLHAHQGNSENAEADMHPATPITVSQELKLSTRISSFGIGIGYIGAIILQIVCILVVIATNQTTFSLRLVLFLIGLWWFIFTIPAALWLRSRPGPPFTTTHQGKHTRSWIGYMAYAWKSLYRTAVRTRHLKDILLFLAAWLLLSDGIATVSGTAVLFAKTQLNMQPAALGLINVIAMVAGVLGAFSWGSVSRVFNLSASQTIIACILLFELVPLYGLLGFIPAVKSLGFLGLQQPWEMFPLGIVYGLVMGGLSSYCRSFFGELIPPGNEAAFYALYAITDKGSSIFGPAIVGIITDRYGEIRPAFVFLAILIFLPLPLMLLVDVERGKRDALALAAELQPSGAQTYGTLPANEDRAPPSEL.

Helical transmembrane passes span 95–115, 117–137, 151–171, and 176–196; these read YYAG…GVEI, TASF…ILII, LLLV…LGVV, and MVGA…FVLL. Positions 214–238 are disordered; it reads AREPPPALDGSRAQEGHSDTTNDID. Residues 225–238 are compositionally biased toward basic and acidic residues; it reads RAQEGHSDTTNDID. N-linked (GlcNAc...) asparagine glycosylation occurs at Asn-244. A helical membrane pass occupies residues 287–307; that stretch reads IGIGYIGAIILQIVCILVVIA. Asn-309 carries N-linked (GlcNAc...) asparagine glycosylation. 3 consecutive transmembrane segments (helical) span residues 317 to 337, 381 to 401, and 415 to 435; these read LVLF…ALWL, ILLF…VSGT, and AALG…AFSW. An N-linked (GlcNAc...) asparagine glycan is attached at Asn-443. 4 consecutive transmembrane segments (helical) span residues 450–470, 487–509, 522–542, and 552–572; these read IIAC…GFIP, FPLG…SFFG, ALYA…VGII, and AFVF…LVDV.

This sequence belongs to the ATG22 family.

It is found in the vacuole membrane. Functionally, vacuolar effluxer which mediate the efflux of amino acids resulting from autophagic degradation. The release of autophagic amino acids allows the maintenance of protein synthesis and viability during nitrogen starvation. The polypeptide is Autophagy-related protein 22-1 (atg22-1) (Neosartorya fischeri (strain ATCC 1020 / DSM 3700 / CBS 544.65 / FGSC A1164 / JCM 1740 / NRRL 181 / WB 181) (Aspergillus fischerianus)).